A 269-amino-acid polypeptide reads, in one-letter code: Tryptophan synthase alpha chain (269 aa).

Active-site proton acceptor residues include Glu-49 and Asp-60.

The protein belongs to the TrpA family. As to quaternary structure, tetramer of two alpha and two beta chains.

The enzyme catalyses (1S,2R)-1-C-(indol-3-yl)glycerol 3-phosphate + L-serine = D-glyceraldehyde 3-phosphate + L-tryptophan + H2O. Its pathway is amino-acid biosynthesis; L-tryptophan biosynthesis; L-tryptophan from chorismate: step 5/5. Its function is as follows. The alpha subunit is responsible for the aldol cleavage of indoleglycerol phosphate to indole and glyceraldehyde 3-phosphate. The sequence is that of Tryptophan synthase alpha chain from Buchnera aphidicola subsp. Acyrthosiphon pisum (strain APS) (Acyrthosiphon pisum symbiotic bacterium).